The sequence spans 202 residues: Nascent polypeptide-associated complex subunit alpha (202 aa).

Basic and acidic residues predominate over residues 1–19 (MADPRVEEIVEEETPKQTV). Residues 1–41 (MADPRVEEIVEEETPKQTVEDAGSDSESEAGEANIPAGAAV) form a disordered region. Residues 45-110 (SRNEKKARKA…AKIEDLNSQA (66 aa)) enclose the NAC-A/B domain. Over residues 117 to 127 (QLAAAEAAAGE) the composition is skewed to low complexity. Residues 117-165 (QLAAAEAAAGEHAGHDHEHDLGTKVPEAETKKEEEEDDGEPVDESGLEA) are disordered. Residues 128–149 (HAGHDHEHDLGTKVPEAETKKE) show a composition bias toward basic and acidic residues. The segment covering 150 to 162 (EEEDDGEPVDESG) has biased composition (acidic residues). The region spanning 163 to 202 (LEAKDIELVMAQANVSRKKAVKALRENDNDIVNSIMALSI) is the UBA domain.

The protein belongs to the NAC-alpha family. As to quaternary structure, part of the nascent polypeptide-associated complex (NAC), consisting of egd2 and egd1. NAC associates with ribosomes via egd1.

The protein resides in the cytoplasm. It is found in the nucleus. Its function is as follows. Component of the nascent polypeptide-associated complex (NAC), a dynamic component of the ribosomal exit tunnel, protecting the emerging polypeptides from interaction with other cytoplasmic proteins to ensure appropriate nascent protein targeting. The NAC complex also promotes mitochondrial protein import by enhancing productive ribosome interactions with the outer mitochondrial membrane and blocks the inappropriate interaction of ribosomes translating non-secretory nascent polypeptides with translocation sites in the membrane of the endoplasmic reticulum. Egd2 may also be involved in transcription regulation. The protein is Nascent polypeptide-associated complex subunit alpha (egd2) of Aspergillus oryzae (strain ATCC 42149 / RIB 40) (Yellow koji mold).